The following is a 195-amino-acid chain: Kiwa protein KwaA (195 aa).

Helical transmembrane passes span 10–30 (GLYI…TAKI), 46–66 (LVLT…SIYF), and 117–137 (IAYL…DKYY).

Its subcellular location is the cell inner membrane. Component of antiviral defense system Kiwa, composed of KwaA and KwaB. Expression of Kiwa in E.coli (strain MG1655) confers resistance to phages lambda and SECphi18. This is Kiwa protein KwaA from Escherichia coli O55:H7 (strain RM12579 / EPEC).